Consider the following 405-residue polypeptide: CLIP domain-containing serine protease B8 (405 aa).

The N-terminal stretch at 1–24 (MSSAVLLLLVCGCALAVLSPVAYG) is a signal peptide. 3 disulfide bridges follow: cysteine 41–cysteine 94, cysteine 52–cysteine 84, and cysteine 58–cysteine 95. A Clip domain is found at 41–95 (CDIPNEPNPGQCMLPAECVAYGKINDVSSLSSIERFSFIKQIQCNGSDTVPYVCC). Residues asparagine 85 and asparagine 108 are each glycosylated (N-linked (GlcNAc...) asparagine). The region spanning 137-404 (IRGGQLAEID…YLPWIKMYTG (268 aa)) is the Peptidase S1 domain. Cysteine 167 and cysteine 183 are disulfide-bonded. Residues histidine 182 and aspartate 249 each act as charge relay system in the active site. Intrachain disulfides connect cysteine 322-cysteine 339 and cysteine 349-cysteine 380. The Charge relay system role is filled by serine 353.

Belongs to the peptidase S1 family. CLIP subfamily. Proteolytic cleavage is necessary for activation. Cleaved and activated by CLIPB4.

It localises to the secreted. In terms of biological role, serine protease that functions in the melanization-mediated immune response. Preferentially, cleaves substrates with an arginine at the P1 site. May be involved in the activation of the prophenoloxidase cascade upstream of CLIPB9; does not cleave prophenoloxidase. The protein is CLIP domain-containing serine protease B8 of Anopheles gambiae (African malaria mosquito).